Reading from the N-terminus, the 350-residue chain is Protein RecA (350 aa).

Residue 68 to 75 (GPESSGKT) coordinates ATP.

This sequence belongs to the RecA family.

Its subcellular location is the cytoplasm. In terms of biological role, can catalyze the hydrolysis of ATP in the presence of single-stranded DNA, the ATP-dependent uptake of single-stranded DNA by duplex DNA, and the ATP-dependent hybridization of homologous single-stranded DNAs. It interacts with LexA causing its activation and leading to its autocatalytic cleavage. The protein is Protein RecA of Mycolicibacterium gilvum (strain PYR-GCK) (Mycobacterium gilvum (strain PYR-GCK)).